The sequence spans 3174 residues: Intermembrane lipid transfer protein VPS13A (3174 aa).

Positions 3–116 (FESVVVDVLN…LMEAKQQELK (114 aa)) constitute a Chorein N-terminal domain. TPR repeat units lie at residues 212 to 245 (LFAY…ENIV), 373 to 406 (LTSK…QTAE), and 537 to 575 (IDSF…NPLD). Serine 839 is subject to Phosphoserine. The FFAT motif lies at 842–848 (EFFDAPC). 2 TPR repeats span residues 1256-1289 (VIDL…LLPL) and 1291-1320 (LEVV…KPME). Position 1416 is a phosphoserine (serine 1416). A TPR 6 repeat occupies 2009–2041 (YEGDTLLGTASPENEFNIPLGSYRSFIFLKPED). The region spanning 2209 to 2454 (VAFHSPYWMV…VFYTWADPVG (246 aa)) is the SHR-BD domain. TPR repeat units lie at residues 2568–2601 (PMSV…DTNV), 2717–2751 (LGFI…FKEE), and 2860–2898 (ILGL…PEEF). The tract at residues 2751–3174 (EYKTASLVDQ…QEAREPSPSL (424 aa)) is required for mitochondrial localization. Residues 2953–3027 (PAGFREGITR…SSTFQGIKRA (75 aa)) are required for lipid droplet localization. The TPR 10 repeat unit spans residues 3086 to 3119 (MLMITRRGVLFVTKGTFGQLTCEWQYSFDEFTKE).

It belongs to the VPS13 family. As to quaternary structure, interacts (via FFAT motif) with VAPA and VAPB. Interacts with RAB7A. Interacts with XK. As to expression, expressed in red blood cells (at protein level). Widely expressed, with high expression in brain, heart, skeletal muscle and kidney.

It localises to the mitochondrion outer membrane. It is found in the endoplasmic reticulum membrane. The protein localises to the endosome membrane. The protein resides in the lysosome membrane. Its subcellular location is the lipid droplet. It localises to the golgi apparatus. It is found in the cytoplasmic vesicle. The protein localises to the secretory vesicle. The protein resides in the neuronal dense core vesicle. Its function is as follows. Mediates the transfer of lipids between membranes at organelle contact sites. Binds phospholipids. Required for the formation or stabilization of ER-mitochondria contact sites which enable transfer of lipids between the ER and mitochondria. Negatively regulates lipid droplet size and motility. Required for efficient lysosomal protein degradation. In Homo sapiens (Human), this protein is Intermembrane lipid transfer protein VPS13A (VPS13A).